The sequence spans 241 residues: Probable transcriptional regulatory protein Neut_0281 (241 aa).

Belongs to the TACO1 family.

It localises to the cytoplasm. This chain is Probable transcriptional regulatory protein Neut_0281, found in Nitrosomonas eutropha (strain DSM 101675 / C91 / Nm57).